The chain runs to 251 residues: Probable transcriptional regulatory protein MLBr00475 (251 aa).

Belongs to the TACO1 family.

It localises to the cytoplasm. This is Probable transcriptional regulatory protein MLBr00475 from Mycobacterium leprae (strain Br4923).